Consider the following 400-residue polypeptide: MELSLYRELPRKRRAVAQPRTRQPPPKVHREDTGIVPGLRVESSVRPDSITNFRRLAAVKFKNPEVMECGGKGGCEECKTRPALMLNCDCDTAKVPICLGCKPRAVRDHPCFRNRTCVSCGTIGVVAVVKLGCCGATLCDSCLGADWYPKSRTRGTCGYCGAQTLGVHYRPMKIIKNTRPYIPAETPIPKVQRHISARLLEEIRRCQLSRSEIVSLFGDHGSMMEYPTAVPAHLLAPKMIGYSDISKAFADDTLPRCSRAMCAANGVPGWRCGFQAPVLFPGMDMCLLCVVRAQEQTITQLVLNGTIWEDAPIAGTYHMSVWLDPTTVSVTPVDISAIDTFAVEFCGNLGSHHPEKFYRLSDLTCRIRWTAGGFLDPESLMVPEKERLKNTASAHSNNSH.

The segment at 9–33 (LPRKRRAVAQPRTRQPPPKVHREDT) is disordered.

This Ictalurid herpesvirus 1 (strain Auburn) (IcHV-1) protein is Putative zinc-binding protein ORF78 (ORF78).